The primary structure comprises 341 residues: Basic membrane protein B (341 aa).

A signal peptide spans 1 to 14; sequence MRIVIFILGILLTS. Cysteine 15 carries the N-palmitoyl cysteine lipid modification. Residue cysteine 15 is the site of S-diacylglycerol cysteine attachment.

The protein belongs to the BMP lipoprotein family. Monomer.

It is found in the cell inner membrane. May be part of an ABC-type nucleoside uptake system involved in the purine salvage pathway. This chain is Basic membrane protein B (bmpB), found in Borrelia garinii subsp. bavariensis (strain ATCC BAA-2496 / DSM 23469 / PBi) (Borreliella bavariensis).